We begin with the raw amino-acid sequence, 235 residues long: Elongation factor Tu (235 aa).

The tr-type G domain maps to 1 to 125 (KNMITGATQM…DGDKYIPTPS (125 aa)). 47–50 (NKQD) provides a ligand contact to GTP.

This sequence belongs to the TRAFAC class translation factor GTPase superfamily. Classic translation factor GTPase family. EF-Tu/EF-1A subfamily. In terms of assembly, monomer.

It is found in the cytoplasm. It carries out the reaction GTP + H2O = GDP + phosphate + H(+). GTP hydrolase that promotes the GTP-dependent binding of aminoacyl-tRNA to the A-site of ribosomes during protein biosynthesis. The chain is Elongation factor Tu (tufA) from Leptolyngbya boryana (Plectonema boryanum).